Here is a 49-residue protein sequence, read N- to C-terminus: uncharacterized protein (49 aa).

An N-terminal signal peptide occupies residues 1-22 (MIQKPILLSSFLFLYIRALLHS).

This is an uncharacterized protein from Saccharomyces cerevisiae (strain ATCC 204508 / S288c) (Baker's yeast).